A 394-amino-acid polypeptide reads, in one-letter code: Actin-related protein 2-B (394 aa).

Residues 160–162, 214–218, and 305–310 each bind ATP; these read GDG, RMMKE, and GGSTMY.

This sequence belongs to the actin family. ARP2 subfamily. In terms of assembly, component of the Arp2/3 complex composed of actr2/arp2, actr3/arp3, arpc1b, arpc2, arpc3, arpc4 and arpc5.

The protein localises to the cytoplasm. The protein resides in the cytoskeleton. Its subcellular location is the cell projection. It localises to the nucleus. ATP-binding component of the Arp2/3 complex, a multiprotein complex that mediates actin polymerization upon stimulation by nucleation-promoting factor (NPF). The Arp2/3 complex mediates the formation of branched actin networks in the cytoplasm, providing the force for cell motility. Seems to contact the pointed end of the daughter actin filament. In addition to its role in the cytoplasmic cytoskeleton, the Arp2/3 complex also promotes actin polymerization in the nucleus, thereby regulating gene transcription and repair of damaged DNA. The Arp2/3 complex promotes homologous recombination (HR) repair in response to DNA damage by promoting nuclear actin polymerization, leading to drive motility of double-strand breaks (DSBs). The chain is Actin-related protein 2-B (actr2b) from Danio rerio (Zebrafish).